An 89-amino-acid polypeptide reads, in one-letter code: Acylphosphatase (89 aa).

In terms of domain architecture, Acylphosphatase-like spans 3–89; sequence CKRWILYGRV…GNYGSFHIEY (87 aa). Catalysis depends on residues Arg-18 and Asn-36.

It belongs to the acylphosphatase family.

It carries out the reaction an acyl phosphate + H2O = a carboxylate + phosphate + H(+). The chain is Acylphosphatase (acyP) from Petrotoga mobilis (strain DSM 10674 / SJ95).